Reading from the N-terminus, the 363-residue chain is RNA exonuclease NGL1 (363 aa).

A mitochondrion-targeting transit peptide spans 1 to 23 (MFTRRFIPVVQSTKQNIGKYVRK).

This sequence belongs to the CCR4/nocturin family.

The protein resides in the mitochondrion. The protein is RNA exonuclease NGL1 (NGL1) of Saccharomyces cerevisiae (strain ATCC 204508 / S288c) (Baker's yeast).